A 127-amino-acid chain; its full sequence is Protein ApaG (127 aa).

The ApaG domain occupies 3 to 127; the sequence is NDQKYDIKVQ…FILSVPRVLH (125 aa).

This is Protein ApaG from Nitrosomonas eutropha (strain DSM 101675 / C91 / Nm57).